Reading from the N-terminus, the 2327-residue chain is Nonribosomal peptide synthetase apmB (2327 aa).

Residues 214-605 are adenylation 1; sequence DTQAKSRPDS…GRKDMQIKLR (392 aa). Residues 734-810 enclose the Carrier 1 domain; the sequence is EPATATGKVL…EMADACTKVI (77 aa). An O-(pantetheine 4'-phosphoryl)serine modification is found at serine 771. A condensation 1 region spans residues 845–1259; the sequence is EDLYPCTAMQ…IFISSKDQES (415 aa). The segment at 1281–1675 is adenylation 2; the sequence is ERIAERPDHE…RRKDTQVKLR (395 aa). The Carrier 2 domain occupies 1816-1892; sequence PPTTDMQITM…AISAVAETLS (77 aa). The residue at position 1853 (serine 1853) is an O-(pantetheine 4'-phosphoryl)serine. The interval 1937–2260 is condensation 2; that stretch reads TDFQSLAING…VFQYQDFGGE (324 aa). A disordered region spans residues 2299–2327; sequence RVDLPRRPSPAGDTRDGPTAASDSPSRAR.

The protein belongs to the NRP synthetase family.

The enzyme catalyses N-benzoyl-L-phenylalaninol + benzoate + L-phenylalanine + 2 ATP = asperphenamate + 2 AMP + 2 diphosphate + H(+). Its pathway is secondary metabolite biosynthesis. Nonribosomal peptide synthetase; part of the gene cluster that mediates the biosynthesis of asperphenamate, a rare linear amino acid ester that exhibits antitumor activity towards a number of cell lines. The structure of asperphenamate contains two subunits, N-benzoylphenylalanine and N-benzoylphenylalaninol, which are connected by an inter-molecular ester bond. The first step of asperphenamate biosynthesis is the generation of N-benzoylphenylalaninol by the nonribosomal peptide synthase apmA. Using phenylalanine and benzoic acid as substrates, apmA catalyzes amide bond formation and tethers the intermediate into the NRPS chain. Then, the terminal R domain of apmA catalyzes the reduction reaction to get the shunt product N-benzoylphenylalaninol. Subsequently, the nonribosomal peptide synthase apmB activates the same substrates as does apmA (phenylalanine and benzoic acid) to produce N-benzoylphenylalanine before condensing N-benzoylphenylalanine and N-benzoylphenylalaninol to release asperphenamate. This is Nonribosomal peptide synthetase apmB from Penicillium brevicompactum.